A 160-amino-acid polypeptide reads, in one-letter code: Troponin C, isoform 2 (160 aa).

EF-hand domains lie at 15 to 50, 51 to 86, 92 to 127, and 128 to 160; these read DQIE…MGQA, FEER…FVVN, GLEE…LDDN, and VSEE…MSGE. 5 residues coordinate Ca(2+): Asp64, Asp66, Ser68, Glu70, and Glu75. Positions 141, 143, 145, 147, and 152 each coordinate Ca(2+).

Belongs to the troponin C family. Pharyngeal muscle.

The chain is Troponin C, isoform 2 (tnc-2) from Caenorhabditis elegans.